We begin with the raw amino-acid sequence, 255 residues long: DNA polymerase epsilon subunit C (255 aa).

The segment at 109 to 255 (KTSSGLHKLS…DEDEASADDG (147 aa)) is disordered. Positions 135-156 (MEEDIPEEDLQEDDEMDVDETE) are enriched in acidic residues. The span at 171-184 (KASASAKSILSAFK) shows a compositional bias: low complexity. Composition is skewed to acidic residues over residues 199-219 (TEED…EIDP) and 236-255 (DLDE…ADDG).

As to quaternary structure, heterotetramer. Consists of four subunits: POL2, DPB2, DPB3 and DPB4.

It is found in the nucleus. As accessory component of the DNA polymerase epsilon (DNA polymerase II) participates in chromosomal DNA replication. In Candida glabrata (strain ATCC 2001 / BCRC 20586 / JCM 3761 / NBRC 0622 / NRRL Y-65 / CBS 138) (Yeast), this protein is DNA polymerase epsilon subunit C (DPB3).